The sequence spans 316 residues: Metal cation efflux system protein CzcD (316 aa).

The Cytoplasmic segment spans residues 1–16 (MGAGHSHDHPGGNERS). Residues 17-37 (LKIALALTGTFLIAEVVGGVM) form a helical membrane-spanning segment. Over 38–46 (TKSLALISD) the chain is Periplasmic. The helical transmembrane segment at 47–67 (AAHMLTDTVALAIALAAIAIA) threads the bilayer. Over 68–81 (KRPADKKRTFGYYR) the chain is Cytoplasmic. The chain crosses the membrane as a helical span at residues 82–102 (FEILAAAFNALLLFGVAIYIL). Residues 103-114 (YEAYLRLKSPPQ) are Periplasmic-facing. The chain crosses the membrane as a helical span at residues 115 to 135 (IESTGMFVVAVLGLIINLISM). Topologically, residues 136–151 (RMLSSGQSSSLNVKGA) are cytoplasmic. 2 helical membrane-spanning segments follow: residues 152-172 (YLEVWSDLLGSVGVIAGAIII) and 174-194 (FTGWAWVDSAIAVLIGLWVLP). Residues 195–316 (RTWILLKSSL…GSKSLAAGGN (122 aa)) are Cytoplasmic-facing.

This sequence belongs to the cation diffusion facilitator (CDF) transporter (TC 2.A.4) family. SLC30A subfamily.

The protein resides in the cell inner membrane. Efflux is inhibited by FCCP. Functionally, mediates a low-level metal ion resistance, probably by efflux of cations from the cytoplasm into the periplasm. Also mediates resistance to cobalt, cadmium and zinc via regulation of the Czc system. May repress expression of the Czc system by an export of the inducing cations. Binds and transports zinc. Can also bind cobalt, copper and nickel. The protein is Metal cation efflux system protein CzcD (czcD) of Cupriavidus metallidurans (strain ATCC 43123 / DSM 2839 / NBRC 102507 / CH34) (Ralstonia metallidurans).